The chain runs to 227 residues: Cytochrome c oxidase subunit 2 (227 aa).

At 1–14 (MAYPFQLGLQDATS) the chain is on the mitochondrial intermembrane side. Residues 15–45 (PIMEELTNFHDHTLMIVFLISSLVLYIISLM) form a helical membrane-spanning segment. The Mitochondrial matrix segment spans residues 46–59 (LTTKLTHTSTMDAQ). A helical membrane pass occupies residues 60-87 (EVETIWTILPAVILILIALPSLRILYMM). Residues 88 to 227 (DEINNPALTV…HFENWSASMI (140 aa)) are Mitochondrial intermembrane-facing. Positions 161, 196, 198, 200, 204, and 207 each coordinate Cu cation. Residue glutamate 198 participates in Mg(2+) binding.

This sequence belongs to the cytochrome c oxidase subunit 2 family. As to quaternary structure, component of the cytochrome c oxidase (complex IV, CIV), a multisubunit enzyme composed of 14 subunits. The complex is composed of a catalytic core of 3 subunits MT-CO1, MT-CO2 and MT-CO3, encoded in the mitochondrial DNA, and 11 supernumerary subunits COX4I, COX5A, COX5B, COX6A, COX6B, COX6C, COX7A, COX7B, COX7C, COX8 and NDUFA4, which are encoded in the nuclear genome. The complex exists as a monomer or a dimer and forms supercomplexes (SCs) in the inner mitochondrial membrane with NADH-ubiquinone oxidoreductase (complex I, CI) and ubiquinol-cytochrome c oxidoreductase (cytochrome b-c1 complex, complex III, CIII), resulting in different assemblies (supercomplex SCI(1)III(2)IV(1) and megacomplex MCI(2)III(2)IV(2)). Found in a complex with TMEM177, COA6, COX18, COX20, SCO1 and SCO2. Interacts with TMEM177 in a COX20-dependent manner. Interacts with COX20. Interacts with COX16. The cofactor is Cu cation.

The protein resides in the mitochondrion inner membrane. It carries out the reaction 4 Fe(II)-[cytochrome c] + O2 + 8 H(+)(in) = 4 Fe(III)-[cytochrome c] + 2 H2O + 4 H(+)(out). Its function is as follows. Component of the cytochrome c oxidase, the last enzyme in the mitochondrial electron transport chain which drives oxidative phosphorylation. The respiratory chain contains 3 multisubunit complexes succinate dehydrogenase (complex II, CII), ubiquinol-cytochrome c oxidoreductase (cytochrome b-c1 complex, complex III, CIII) and cytochrome c oxidase (complex IV, CIV), that cooperate to transfer electrons derived from NADH and succinate to molecular oxygen, creating an electrochemical gradient over the inner membrane that drives transmembrane transport and the ATP synthase. Cytochrome c oxidase is the component of the respiratory chain that catalyzes the reduction of oxygen to water. Electrons originating from reduced cytochrome c in the intermembrane space (IMS) are transferred via the dinuclear copper A center (CU(A)) of subunit 2 and heme A of subunit 1 to the active site in subunit 1, a binuclear center (BNC) formed by heme A3 and copper B (CU(B)). The BNC reduces molecular oxygen to 2 water molecules using 4 electrons from cytochrome c in the IMS and 4 protons from the mitochondrial matrix. The chain is Cytochrome c oxidase subunit 2 (MT-CO2) from Berylmys bowersi (Bower's white-toothed rat).